The chain runs to 165 residues: Thiol peroxidase (165 aa).

In terms of domain architecture, Thioredoxin spans 18-165 (PAVGSPAPAF…YEAALAALGA (148 aa)). The Cysteine sulfenic acid (-SOH) intermediate role is filled by cysteine 60. Cysteine 60 and cysteine 93 are disulfide-bonded.

It belongs to the peroxiredoxin family. Tpx subfamily. Homodimer.

The catalysed reaction is a hydroperoxide + [thioredoxin]-dithiol = an alcohol + [thioredoxin]-disulfide + H2O. Thiol-specific peroxidase that catalyzes the reduction of hydrogen peroxide and organic hydroperoxides to water and alcohols, respectively. Plays a role in cell protection against oxidative stress by detoxifying peroxides. This is Thiol peroxidase from Mycobacterium bovis (strain ATCC BAA-935 / AF2122/97).